A 931-amino-acid chain; its full sequence is Protein unc-45 homolog B (931 aa).

TPR repeat units lie at residues 6 to 39, 43 to 76, and 77 to 110; these read AVQLKEEGNRHFQLQDYKAATNSYSQALKLTKDK, ATLYRNRAACGLKTESYVQAASDASRAIDINSSD, and IKALYRRCQALEHLGKLDQAFKDVQRCATLEPRN. 3 ARM repeats span residues 169-208, 211-250, and 751-790; these read EAGAEKIFQNNGVALLLQLLDTKKPELVLAAVRTLSGMCS, QARATVILHAVRIDRICSLMAVENEEMSLAVCNLLQAIID, and DKLRQKIFKERALPDIENYMFENHDQLRQAATECMCNMVL.

In terms of assembly, interacts with HSP90 in an ATP-independent manner. Interacts with UBE4B; the interaction may target UNC45B for proteasomal degradation. In terms of tissue distribution, expressed in eye lens tissues. Expressed in muscle (at protein level).

It localises to the cytoplasm. The protein resides in the myofibril. It is found in the sarcomere. The protein localises to the z line. Its subcellular location is the a band. It localises to the perinuclear region. The protein resides in the cytosol. Acts as a co-chaperone for HSP90 and is required for proper folding of the myosin motor domain. Plays a role in sarcomere formation during muscle cell development. Is necessary for normal early lens development. This is Protein unc-45 homolog B from Homo sapiens (Human).